A 664-amino-acid chain; its full sequence is uncharacterized protein (664 aa).

This is an uncharacterized protein from Mycoplasma pneumoniae (strain ATCC 29342 / M129 / Subtype 1) (Mycoplasmoides pneumoniae).